The sequence spans 1059 residues: Ubiquitin carboxyl-terminal hydrolase 36 (1059 aa).

Disordered regions lie at residues 22–45 (LGGN…NGSL) and 102–145 (GKLV…KPKR). Over residues 23–45 (GGNSSAGSSTDQAKSGEDTNGSL) the composition is skewed to polar residues. Low complexity predominate over residues 121–138 (HPNNQSHHNHPHPTSNPN). Residues 168–457 (TGMINVGNTC…NAYIMFFELD (290 aa)) enclose the USP domain. Catalysis depends on Cys-177, which acts as the Nucleophile. Residue His-416 is the Proton acceptor of the active site. 4 disordered regions span residues 464–512 (PPAN…YTNG), 554–853 (ATSA…VTSN), 941–1005 (RQRD…FYNQ), and 1022–1059 (FGGA…QQQT). Composition is skewed to low complexity over residues 479–494 (STTP…PSPT) and 561–580 (NGNK…KSIN). Ser-490 and Ser-492 each carry phosphoserine. Positions 603–615 (TTAQLPSMPNMTE) are enriched in polar residues. Thr-632 and Thr-636 each carry phosphothreonine. Residues Ser-646 and Ser-648 each carry the phosphoserine modification. Polar residues predominate over residues 673–702 (ESGQTNGHSKTNGSLTNGSASSSVHVNNSK). The segment covering 703–720 (QKTDAIDEIFKSLKKSAD) has biased composition (basic and acidic residues). Phosphoserine is present on Ser-721. A compositionally biased stretch (acidic residues) spans 721-730 (SEEDDDEEEP). The segment covering 740–750 (PQKQSQSQSKA) has biased composition (low complexity). Residues 751 to 760 (PPSPKTPPSP) are compositionally biased toward pro residues. Ser-753 is modified (phosphoserine). Phosphothreonine is present on Thr-756. Ser-759 is modified (phosphoserine). The span at 779 to 788 (DAIDDDDDAV) shows a compositional bias: acidic residues. Thr-799 is subject to Phosphothreonine. The segment covering 806–818 (NPFSSSKPSTDSP) has biased composition (polar residues). At Ser-817 the chain carries Phosphoserine. Residue Thr-820 is modified to Phosphothreonine. Residues 833-853 (ALKSHQQPRVGNGYQSNVTSN) are compositionally biased toward polar residues. Low complexity predominate over residues 963 to 974 (SGSAKGNNASNS).

It belongs to the peptidase C19 family. In terms of assembly, interacts with atms/PAF1, but not with CycT.

It is found in the nucleus. Its subcellular location is the nucleolus. The catalysed reaction is Thiol-dependent hydrolysis of ester, thioester, amide, peptide and isopeptide bonds formed by the C-terminal Gly of ubiquitin (a 76-residue protein attached to proteins as an intracellular targeting signal).. In terms of biological role, required for maintaining multiple types of adult stem cells, including male and female germline, epithelial follicle cell and intestinal stem cells. May function as a transcriptional repressor by continually deubiquiting histone H2B at the promoters of genes critical for cellular differentiation, thereby preventing histone H3 'Lys-4' trimethylation (H3K4). Controls selective autophagy activation by ubiquitinated proteins. This chain is Ubiquitin carboxyl-terminal hydrolase 36 (Usp36), found in Drosophila sechellia (Fruit fly).